Reading from the N-terminus, the 306-residue chain is Ornithine carbamoyltransferase (306 aa).

Residues 54-57 (STRT), glutamine 81, arginine 105, and 132-135 (HPLQ) contribute to the carbamoyl phosphate site. Residues asparagine 162, aspartate 226, and 230 to 231 (SM) contribute to the L-ornithine site. Carbamoyl phosphate contacts are provided by residues 266–267 (CL) and arginine 294.

The protein belongs to the aspartate/ornithine carbamoyltransferase superfamily. OTCase family.

It localises to the cytoplasm. The enzyme catalyses carbamoyl phosphate + L-ornithine = L-citrulline + phosphate + H(+). The protein operates within amino-acid biosynthesis; L-arginine biosynthesis; L-arginine from L-ornithine and carbamoyl phosphate: step 1/3. Its function is as follows. Reversibly catalyzes the transfer of the carbamoyl group from carbamoyl phosphate (CP) to the N(epsilon) atom of ornithine (ORN) to produce L-citrulline. This is Ornithine carbamoyltransferase from Sulfurisphaera tokodaii (strain DSM 16993 / JCM 10545 / NBRC 100140 / 7) (Sulfolobus tokodaii).